We begin with the raw amino-acid sequence, 114 residues long: Gene 37 protein (114 aa).

This is Gene 37 protein (37) from Mycobacterium (Mycobacteriophage L5).